A 156-amino-acid chain; its full sequence is Putative increased recombination centers protein 11 (156 aa).

The chain crosses the membrane as a helical span at residues 20 to 42 (AALGATCLLHYLTTSLSIRFFFH).

It localises to the membrane. The chain is Putative increased recombination centers protein 11 (IRC11) from Saccharomyces cerevisiae (strain ATCC 204508 / S288c) (Baker's yeast).